The sequence spans 279 residues: MKVRLKSKKKMKKPALNPERRKFLKEATRTAGGLAGVGILLGLQQNQSLAREGVPLRPPFALQDAKAFSAACIRCGQCVQACPYDMLHLASLLSPVEAGTPYFIARDKPCEMCPDIPCAKACPSGALDRQATDINESRMGLSVLLDHETCLNYQGLRCDVCYRVCPLIDKAITLETQHNPRSDKHALFIPTVHSDACTGCGKCEQACVLEEAAIKILPMDLAKGMLGKHYRLGWEEKAKAGHSLAPKDMISLPTRTPEGTTVIPEPAEPVLAPILGSGK.

The tat-type signal signal peptide spans 1-50 (MKVRLKSKKKMKKPALNPERRKFLKEATRTAGGLAGVGILLGLQQNQSLA). 4Fe-4S ferredoxin-type domains are found at residues 63 to 92 (QDAK…LASL), 100 to 132 (TPYF…RQAT), 141 to 177 (LSVL…LETQ), and 188 to 219 (FIPT…ILPM). 16 residues coordinate [4Fe-4S] cluster: C72, C75, C78, C82, C110, C113, C118, C122, C150, C158, C161, C165, C197, C200, C203, and C207.

[4Fe-4S] cluster serves as cofactor. Predicted to be exported by the Tat system. The position of the signal peptide cleavage has not been experimentally proven.

It is found in the periplasm. Functionally, required for electron transfer from ubiquinol, via NapC, to the periplasmic nitrate reductase NapAB complex. The chain is Ferredoxin-type protein NapG (napG) from Haemophilus influenzae (strain ATCC 51907 / DSM 11121 / KW20 / Rd).